Consider the following 208-residue polypeptide: Small ribosomal subunit protein uS4A (208 aa).

In terms of domain architecture, S4 RNA-binding spans 98–164 (TRLDNVVYTL…AKIQSAIQAV (67 aa)).

Belongs to the universal ribosomal protein uS4 family. Part of the 30S ribosomal subunit. Contacts protein S5. The interaction surface between S4 and S5 is involved in control of translational fidelity.

In terms of biological role, one of the primary rRNA binding proteins, it binds directly to 16S rRNA where it nucleates assembly of the body of the 30S subunit. With S5 and S12 plays an important role in translational accuracy. This is Small ribosomal subunit protein uS4A from Bdellovibrio bacteriovorus (strain ATCC 15356 / DSM 50701 / NCIMB 9529 / HD100).